Reading from the N-terminus, the 307-residue chain is NAD kinase (307 aa).

The active-site Proton acceptor is the Asp-78. NAD(+) is bound by residues 78-79 (DG), His-83, 154-155 (NE), Arg-165, Arg-182, Asp-184, and Gln-255.

The protein belongs to the NAD kinase family. Requires a divalent metal cation as cofactor.

It localises to the cytoplasm. The enzyme catalyses NAD(+) + ATP = ADP + NADP(+) + H(+). Functionally, involved in the regulation of the intracellular balance of NAD and NADP, and is a key enzyme in the biosynthesis of NADP. Catalyzes specifically the phosphorylation on 2'-hydroxyl of the adenosine moiety of NAD to yield NADP. The chain is NAD kinase from Halorhodospira halophila (strain DSM 244 / SL1) (Ectothiorhodospira halophila (strain DSM 244 / SL1)).